Reading from the N-terminus, the 366-residue chain is Chorismate synthase (366 aa).

NADP(+) contacts are provided by R48 and R54. FMN-binding positions include R125 to S127, N237 to A238, G277, K292 to S296, and R318.

Belongs to the chorismate synthase family. In terms of assembly, homotetramer. FMNH2 serves as cofactor.

The catalysed reaction is 5-O-(1-carboxyvinyl)-3-phosphoshikimate = chorismate + phosphate. The protein operates within metabolic intermediate biosynthesis; chorismate biosynthesis; chorismate from D-erythrose 4-phosphate and phosphoenolpyruvate: step 7/7. Functionally, catalyzes the anti-1,4-elimination of the C-3 phosphate and the C-6 proR hydrogen from 5-enolpyruvylshikimate-3-phosphate (EPSP) to yield chorismate, which is the branch point compound that serves as the starting substrate for the three terminal pathways of aromatic amino acid biosynthesis. This reaction introduces a second double bond into the aromatic ring system. This chain is Chorismate synthase, found in Acidovorax sp. (strain JS42).